We begin with the raw amino-acid sequence, 618 residues long: 1-deoxy-D-xylulose-5-phosphate synthase (618 aa).

Thiamine diphosphate contacts are provided by residues H76 and 117-119 (GHS). Residue D148 participates in Mg(2+) binding. Thiamine diphosphate contacts are provided by residues 149-150 (GA), N177, Y284, and E364. Mg(2+) is bound at residue N177.

This sequence belongs to the transketolase family. DXPS subfamily. In terms of assembly, homodimer. Requires Mg(2+) as cofactor. Thiamine diphosphate serves as cofactor.

It catalyses the reaction D-glyceraldehyde 3-phosphate + pyruvate + H(+) = 1-deoxy-D-xylulose 5-phosphate + CO2. It functions in the pathway metabolic intermediate biosynthesis; 1-deoxy-D-xylulose 5-phosphate biosynthesis; 1-deoxy-D-xylulose 5-phosphate from D-glyceraldehyde 3-phosphate and pyruvate: step 1/1. In terms of biological role, catalyzes the acyloin condensation reaction between C atoms 2 and 3 of pyruvate and glyceraldehyde 3-phosphate to yield 1-deoxy-D-xylulose-5-phosphate (DXP). The chain is 1-deoxy-D-xylulose-5-phosphate synthase from Francisella philomiragia subsp. philomiragia (strain ATCC 25017 / CCUG 19701 / FSC 153 / O#319-036).